We begin with the raw amino-acid sequence, 794 residues long: E3 ubiquitin-protein ligase wwp-1 (794 aa).

Residues 1–16 (MARNEPSSQQPSSSGS) are compositionally biased toward low complexity. Disordered stretches follow at residues 1 to 31 (MARN…KPSK) and 155 to 198 (RSAG…AAPT). The C2 domain maps to 10–124 (QPSSSGSNGT…TRNENGEFKN (115 aa)). A compositionally biased stretch (polar residues) spans 17 to 27 (NGTPAQQNGSA). The segment covering 161–186 (AETAASASSEASTSNGVATSSSARRP) has biased composition (low complexity). WW domains are found at residues 219–252 (EQLP…RPST), 253–286 (QPLP…RPTA), 324–358 (GPLP…DPRT), and 366–399 (QPLP…DPRT). The region spanning 460–794 (NAVDLRRRLY…IEMTEGFGNE (335 aa)) is the HECT domain. Cys-762 acts as the Glycyl thioester intermediate in catalysis.

As to quaternary structure, interacts (via WW domains) with Kruppel-like factor klf-1. Interacts with ubiquitin-conjugating enzyme E2 ubc-18. As to expression, expressed in neurons localized in the head and tail of adults.

It carries out the reaction S-ubiquitinyl-[E2 ubiquitin-conjugating enzyme]-L-cysteine + [acceptor protein]-L-lysine = [E2 ubiquitin-conjugating enzyme]-L-cysteine + N(6)-ubiquitinyl-[acceptor protein]-L-lysine.. It functions in the pathway protein modification; protein ubiquitination. E3 ubiquitin-protein ligase which accepts ubiquitin from an E2 ubiquitin-conjugating enzyme in the form of a thioester and then directly transfers the ubiquitin to targeted substrates. Ubiquitinates klf-1. Required for diet restriction-mediated lifespan extension, acting in concert with Kruppel-like factor klf-1 in the intestine to perhaps modulate genes involved in lipid metabolism. Probably acting downstream of the Insulin/IGF-1-like signaling (IIS) mediated pathway, plays a role in the immune response to infection by the Gram-negative bacterium P.aeruginosa, at least partly in response to bacterial pore-forming toxins. The chain is E3 ubiquitin-protein ligase wwp-1 from Caenorhabditis elegans.